A 1015-amino-acid chain; its full sequence is Probable beta-galactosidase B (1015 aa).

The signal sequence occupies residues 1–21 (MAHIYRLLLLLLSNLWFSAAA). Asn23 is a glycosylation site (N-linked (GlcNAc...) asparagine). Tyr90 serves as a coordination point for substrate. N-linked (GlcNAc...) asparagine glycosylation is present at Asn100. Positions 135, 136, and 137 each coordinate substrate. The N-linked (GlcNAc...) asparagine glycan is linked to Asn172. Asn195 contacts substrate. Residue Glu196 is the Proton donor of the active site. The N-linked (GlcNAc...) asparagine glycan is linked to Asn211. Tyr265 contributes to the substrate binding site. A disulfide bond links Cys271 and Cys324. Glu308 functions as the Nucleophile in the catalytic mechanism. Tyr373 contributes to the substrate binding site. Asn411, Asn441, Asn456, Asn554, Asn679, Asn735, Asn775, Asn821, and Asn878 each carry an N-linked (GlcNAc...) asparagine glycan.

Belongs to the glycosyl hydrolase 35 family.

It localises to the secreted. The enzyme catalyses Hydrolysis of terminal non-reducing beta-D-galactose residues in beta-D-galactosides.. Its function is as follows. Cleaves beta-linked terminal galactosyl residues from gangliosides, glycoproteins, and glycosaminoglycans. In Neosartorya fischeri (strain ATCC 1020 / DSM 3700 / CBS 544.65 / FGSC A1164 / JCM 1740 / NRRL 181 / WB 181) (Aspergillus fischerianus), this protein is Probable beta-galactosidase B (lacB).